The sequence spans 91 residues: Bacterial microcompartment shell protein PduJ (91 aa).

Positions 4 to 88 (ALGLVETKGL…PHSDVEAILP (85 aa)) constitute a BMC domain.

The protein belongs to the bacterial microcompartments protein family. As to quaternary structure, homohexamer with a central pore of about 5.7 Angstroms in diameter. Interacts with PduP, which targets PduP to the BMC.

It is found in the bacterial microcompartment. It participates in polyol metabolism; 1,2-propanediol degradation. Its function is as follows. One of the major shell proteins of the bacterial microcompartment (BMC) dedicated to 1,2-propanediol (1,2-PD) degradation. The isolated BMC shell component protein ratio for J:A:B':B:K:T:U is approximately 15:10:7:6:1:1:2. At least one of PduA or PduJ is required for BMC assembly; it must be encoded as the first gene in the pdu operon. Required for structural integrity of BMCs and to mitigate propionaldehyde toxicity, probably joins facets responsible for BMC closure. Edge residues (particularly Lys-25) are important for function and assembly of the BMC. 80% identical to PduA; although their pore regions appear structurally identical, unlike PduA plays no role in 1,2-PD diffusion into or out of the BMC shell. If pduJ is cloned in the chromosomal position of pduA it is able to complement a pduA deletion; it then has a functional pore as it assumes the transport functions of PduA. Overexpression of this protein leads to aberrant filaments that extend the length of the cell, cross the cleavage furrow and impair division. The filaments form nanotubes with a hollow center. Modeling suggests PduJ is probably the hub for binding multiple enzymes to the interior of the BMC; modeling suggests PduC, PduD, PduG and PduM are targeted to PduJ. In terms of biological role, the 1,2-propanediol (1,2-PD) degradation bacterial microcompartment (BMC) concentrates low levels of 1,2-PD catabolic enzymes, concentrates volatile reaction intermediates thus enhancing pathway flux and keeps the level of toxic, mutagenic propionaldehyde low. The sequence is that of Bacterial microcompartment shell protein PduJ from Salmonella typhimurium (strain LT2 / SGSC1412 / ATCC 700720).